The chain runs to 269 residues: Thiazole synthase (269 aa).

Lys109 acts as the Schiff-base intermediate with DXP in catalysis. Residues Gly170, Ala196–Gly197, and Asn218–Thr219 contribute to the 1-deoxy-D-xylulose 5-phosphate site.

The protein belongs to the ThiG family. In terms of assembly, homotetramer. Forms heterodimers with either ThiH or ThiS.

It localises to the plastid. The protein localises to the chloroplast. The catalysed reaction is [ThiS sulfur-carrier protein]-C-terminal-Gly-aminoethanethioate + 2-iminoacetate + 1-deoxy-D-xylulose 5-phosphate = [ThiS sulfur-carrier protein]-C-terminal Gly-Gly + 2-[(2R,5Z)-2-carboxy-4-methylthiazol-5(2H)-ylidene]ethyl phosphate + 2 H2O + H(+). It participates in cofactor biosynthesis; thiamine diphosphate biosynthesis. Its function is as follows. Catalyzes the rearrangement of 1-deoxy-D-xylulose 5-phosphate (DXP) to produce the thiazole phosphate moiety of thiamine. Sulfur is provided by the thiocarboxylate moiety of the carrier protein ThiS. In vitro, sulfur can be provided by H(2)S. This Phaeodactylum tricornutum (strain CCAP 1055/1) protein is Thiazole synthase.